A 353-amino-acid chain; its full sequence is Photosystem II D2 protein (353 aa).

Position 2 is an N-acetylthreonine (T2). T2 bears the Phosphothreonine mark. A helical membrane pass occupies residues 41 to 61 (CAYFALGGWFTGTTFVTSWYT). Residue H118 coordinates chlorophyll a. The helical transmembrane segment at 125-141 (GFMLRQFELARSVQLRP) threads the bilayer. The pheophytin a site is built by Q130 and N143. The chain crosses the membrane as a helical span at residues 153–166 (VFVSVFLIYPLGQS). Residue H198 participates in chlorophyll a binding. The helical transmembrane segment at 208–228 (AALLCAIHGATVENTLFEDGD) threads the bilayer. 2 residues coordinate a plastoquinone: H215 and F262. Residue H215 coordinates Fe cation. Fe cation is bound at residue H269. A helical membrane pass occupies residues 279–295 (GLWMSAIGVVGLALNLR).

It belongs to the reaction center PufL/M/PsbA/D family. As to quaternary structure, PSII is composed of 1 copy each of membrane proteins PsbA, PsbB, PsbC, PsbD, PsbE, PsbF, PsbH, PsbI, PsbJ, PsbK, PsbL, PsbM, PsbT, PsbX, PsbY, PsbZ, Psb30/Ycf12, at least 3 peripheral proteins of the oxygen-evolving complex and a large number of cofactors. It forms dimeric complexes. Requires The D1/D2 heterodimer binds P680, chlorophylls that are the primary electron donor of PSII, and subsequent electron acceptors. It shares a non-heme iron and each subunit binds pheophytin, quinone, additional chlorophylls, carotenoids and lipids. There is also a Cl(-1) ion associated with D1 and D2, which is required for oxygen evolution. The PSII complex binds additional chlorophylls, carotenoids and specific lipids. as cofactor.

The protein resides in the plastid. It is found in the chloroplast thylakoid membrane. The enzyme catalyses 2 a plastoquinone + 4 hnu + 2 H2O = 2 a plastoquinol + O2. Functionally, photosystem II (PSII) is a light-driven water:plastoquinone oxidoreductase that uses light energy to abstract electrons from H(2)O, generating O(2) and a proton gradient subsequently used for ATP formation. It consists of a core antenna complex that captures photons, and an electron transfer chain that converts photonic excitation into a charge separation. The D1/D2 (PsbA/PsbD) reaction center heterodimer binds P680, the primary electron donor of PSII as well as several subsequent electron acceptors. D2 is needed for assembly of a stable PSII complex. This is Photosystem II D2 protein from Phalaenopsis aphrodite subsp. formosana (Moth orchid).